The sequence spans 258 residues: Spindlin-3 (258 aa).

The disordered stretch occupies residues 1–23 (MKTPFGKAAAGQRSRTGAGHGSV). Tudor-like domain stretches follow at residues 50–99 (VGCR…LELH), 129–178 (VGKA…YQLL), and 210–255 (VGKQ…YDLV). Histone H3K4me3 and H3R8me2a binding regions lie at residues Glu-138 and 246-248 (DFH).

It belongs to the SPIN/STSY family. Interacts with C11orf84/SPINDOC.

Functionally, exhibits H3K4me3-binding activity. This chain is Spindlin-3 (SPIN3), found in Pongo abelii (Sumatran orangutan).